Here is a 500-residue protein sequence, read N- to C-terminus: Lysine--tRNA ligase (500 aa).

Mg(2+) contacts are provided by glutamate 410 and glutamate 417.

This sequence belongs to the class-II aminoacyl-tRNA synthetase family. As to quaternary structure, homodimer. Mg(2+) is required as a cofactor.

It is found in the cytoplasm. The enzyme catalyses tRNA(Lys) + L-lysine + ATP = L-lysyl-tRNA(Lys) + AMP + diphosphate. The protein is Lysine--tRNA ligase of Shewanella putrefaciens (strain CN-32 / ATCC BAA-453).